We begin with the raw amino-acid sequence, 307 residues long: Ornithine carbamoyltransferase (307 aa).

Carbamoyl phosphate contacts are provided by residues 51–54 (STRT), Q78, R102, and 129–132 (HPCQ). Residues N160, D220, and 224-225 (SM) each bind L-ornithine. Carbamoyl phosphate-binding positions include 260–261 (CL) and R288.

It belongs to the aspartate/ornithine carbamoyltransferase superfamily. OTCase family.

The protein localises to the cytoplasm. The catalysed reaction is carbamoyl phosphate + L-ornithine = L-citrulline + phosphate + H(+). It participates in amino-acid biosynthesis; L-arginine biosynthesis; L-arginine from L-ornithine and carbamoyl phosphate: step 1/3. Reversibly catalyzes the transfer of the carbamoyl group from carbamoyl phosphate (CP) to the N(epsilon) atom of ornithine (ORN) to produce L-citrulline. This Archaeoglobus fulgidus (strain ATCC 49558 / DSM 4304 / JCM 9628 / NBRC 100126 / VC-16) protein is Ornithine carbamoyltransferase (argF).